The following is a 335-amino-acid chain: Fructokinase-2 (335 aa).

It belongs to the carbohydrate kinase PfkB family. In terms of tissue distribution, expressed in roots, at higher levels in stems, and hardly detectable in leaves.

It catalyses the reaction D-fructose + ATP = D-fructose 6-phosphate + ADP + H(+). It participates in glycan biosynthesis; starch biosynthesis. With respect to regulation, inhibited at high fructose. Its function is as follows. May play an important role in maintaining the flux of carbon towards starch formation. May also be involved in a sugar-sensing pathway. This Zea mays (Maize) protein is Fructokinase-2 (FRK2).